The primary structure comprises 455 residues: MKVTQEKLPDSQIGLEIEISAEASKKAYETKVNTLARTANIPGFRKGKVPRQILLQRIGTEYIKATTLQELIEDSLKAAIKQESLESIGDFELKSKFDELVQQFKPGEPLTFSAAIDVPPTVTLGDYQSLSVKAEETVYNPEKLENWFKERQEQQATLVPVEDRKAEMGDVAIVDYEGYFAPEEGEETERKPIPGVQGQDFRVDLTEGRFIQGMVEGIVGMQPEETQEITVTFPSDYPREDLAGQVAIFKITVKELKAKELPELDDDFAEEVSEFATIAELRESLEKQFTEEAQEATKKSIHDAMITQLLEICPVDLPNTLIEDEVTQVLTQTAMQMEQMGIDIRQLFVKENIPKLRENARPDAISRLKQSLILQEIAKVESITPEASLVEERINKIKEQLSERDVDFDKLEQMVTEELTMEAILNWLQEKATVELVPEGTLKPAEDQEAESQEE.

Residues 169-262 (GDVAIVDYEG…VKELKAKELP (94 aa)) form the PPIase FKBP-type domain.

This sequence belongs to the FKBP-type PPIase family. Tig subfamily.

The protein resides in the cytoplasm. It carries out the reaction [protein]-peptidylproline (omega=180) = [protein]-peptidylproline (omega=0). In terms of biological role, involved in protein export. Acts as a chaperone by maintaining the newly synthesized protein in an open conformation. Functions as a peptidyl-prolyl cis-trans isomerase. The protein is Trigger factor of Rippkaea orientalis (strain PCC 8801 / RF-1) (Cyanothece sp. (strain PCC 8801)).